A 113-amino-acid polypeptide reads, in one-letter code: Hydrogenase maturation factor HybF (113 aa).

Ni(2+) contacts are provided by histidine 2 and glutamate 3. Zn(2+)-binding residues include cysteine 73, cysteine 76, cysteine 89, and cysteine 92.

The protein belongs to the HypA/HybF family. HybF subfamily.

Its function is as follows. Involved in the maturation of [NiFe] hydrogenases. Required for nickel insertion into the metal center of the hydrogenase. The chain is Hydrogenase maturation factor HybF from Escherichia coli O6:H1 (strain CFT073 / ATCC 700928 / UPEC).